The chain runs to 588 residues: Vicilin C72 (588 aa).

A signal peptide spans Met1 to Ala25. Disordered regions lie at residues Arg159–His183 and Pro460–Arg487. Residues Glu163–Gln175 show a composition bias toward acidic residues. 2 consecutive Cupin type-1 domains span residues Phe182–Asp340 and Phe386–Asp566. Acidic residues predominate over residues Phe465–Glu478.

This sequence belongs to the 7S seed storage protein family.

The protein resides in the vacuole. The protein localises to the aleurone grain. In terms of biological role, seed storage protein. This is Vicilin C72 from Gossypium hirsutum (Upland cotton).